Reading from the N-terminus, the 285-residue chain is Pantothenate synthetase (285 aa).

32-39 (MGALHDGH) is a binding site for ATP. Catalysis depends on H39, which acts as the Proton donor. Q63 is a binding site for (R)-pantoate. Q63 is a beta-alanine binding site. 149 to 152 (GEKD) contributes to the ATP binding site. Position 155 (Q155) interacts with (R)-pantoate. ATP-binding positions include V178 and 186–189 (MSSR).

The protein belongs to the pantothenate synthetase family. Homodimer.

It localises to the cytoplasm. The enzyme catalyses (R)-pantoate + beta-alanine + ATP = (R)-pantothenate + AMP + diphosphate + H(+). The protein operates within cofactor biosynthesis; (R)-pantothenate biosynthesis; (R)-pantothenate from (R)-pantoate and beta-alanine: step 1/1. In terms of biological role, catalyzes the condensation of pantoate with beta-alanine in an ATP-dependent reaction via a pantoyl-adenylate intermediate. The chain is Pantothenate synthetase from Ruegeria pomeroyi (strain ATCC 700808 / DSM 15171 / DSS-3) (Silicibacter pomeroyi).